Consider the following 664-residue polypeptide: Exoribonuclease 2 (664 aa).

Residues Arg193–Ile521 enclose the RNB domain. The 83-residue stretch at Gln568–Thr650 folds into the S1 motif domain.

It belongs to the RNR ribonuclease family. RNase II subfamily.

It is found in the cytoplasm. It carries out the reaction Exonucleolytic cleavage in the 3'- to 5'-direction to yield nucleoside 5'-phosphates.. In terms of biological role, involved in mRNA degradation. Hydrolyzes single-stranded polyribonucleotides processively in the 3' to 5' direction. The chain is Exoribonuclease 2 from Vibrio vulnificus (strain YJ016).